A 357-amino-acid polypeptide reads, in one-letter code: Peptide chain release factor 1 (357 aa).

Gln234 is subject to N5-methylglutamine.

It belongs to the prokaryotic/mitochondrial release factor family. In terms of processing, methylated by PrmC. Methylation increases the termination efficiency of RF1.

It localises to the cytoplasm. Peptide chain release factor 1 directs the termination of translation in response to the peptide chain termination codons UAG and UAA. The polypeptide is Peptide chain release factor 1 (Chlorobaculum tepidum (strain ATCC 49652 / DSM 12025 / NBRC 103806 / TLS) (Chlorobium tepidum)).